The following is a 2131-amino-acid chain: Beta/gamma crystallin domain-containing protein 1 (2131 aa).

5 disordered regions span residues 1-53 (MPLS…LPAP), 104-370 (KSRA…KGHA), 385-674 (TEGA…PVHK), 688-707 (RTNSSPRHTDIRGQRNTPAS), and 723-743 (AKEMEQPEKKVMPNSPQNGVL). Residues 19-35 (PPKKHTTFHLWRSKKKQ) show a composition bias toward basic residues. The span at 135-147 (RNGLESPTRSNAK) shows a compositional bias: polar residues. Basic and acidic residues-rich tracts occupy residues 160 to 169 (LPERESERSR) and 184 to 194 (GSPRENPREAE). A compositionally biased stretch (polar residues) spans 248-265 (ATTTAKQLHSSPGNSSRQ). Residues 414-424 (SGRRSGRRRGS) are compositionally biased toward basic residues. Over residues 479 to 490 (ASAASPESKPSP) the composition is skewed to low complexity. Phosphoserine is present on residues Ser-483 and Ser-489. Basic and acidic residues-rich tracts occupy residues 536-546 (PAKESPPKRVP) and 562-572 (EAARAIPRELP). Over residues 609–619 (RAAGAPGASDA) the composition is skewed to low complexity. The segment covering 723-733 (AKEMEQPEKKV) has biased composition (basic and acidic residues). Phosphoserine is present on residues Ser-737 and Ser-756. Disordered regions lie at residues 758–791 (EEILPATRGMNGDSSENQALGPQPNQDDKADVQT) and 837–889 (DIPT…KDTC). Residues 769–782 (GDSSENQALGPQPN) show a composition bias toward polar residues. The span at 864-881 (SPAESSPGPSLSLSAPAP) shows a compositional bias: low complexity. The residue at position 892 (Ser-892) is a Phosphoserine. 4 disordered regions span residues 926–947 (LELGGETTPPLSTERSPEAVGS), 1041–1101 (QAQS…VFDS), 1271–1302 (STSQNGSLSQSSVSQPTTEGAPPCGLNKEQSN), and 1316–1348 (SSSTSHSSLKSPSHMEKYPQKEKTKEDLDSRSN). Phosphothreonine is present on Thr-933. The span at 1055-1089 (SSPTNSPSSGNHLATPQRPDQTVTNGQDSPASLLN) shows a compositional bias: polar residues. 3 stretches are compositionally biased toward low complexity: residues 1091–1101 (SAGSDDSVFDS), 1271–1288 (STSQNGSLSQSSVSQPTT), and 1316–1327 (SSSTSHSSLKSP). Basic and acidic residues predominate over residues 1328 to 1348 (SHMEKYPQKEKTKEDLDSRSN). 12 consecutive Beta/gamma crystallin 'Greek key' domains span residues 1430-1469 (GKVVIYSEPDVSEKCIEVFSDIQDCSSWSLSPVILIKVVR), 1470-1525 (GCWI…RHVV), 1531-1571 (SHID…KVHW), 1572-1614 (GTWL…RPLK), 1626-1678 (PKVV…KVLR), 1679-1721 (GIWV…RPIL), 1727-1769 (AHMI…NVLS), 1770-1812 (GVWV…QPIC), 1823-1860 (NQIHLFSEPQFQGHSQSFEETTSQIDDSFSTKSCRVSG), 1861-1904 (GSWV…RFID), 1910-1950 (PTII…QVIG), and 1951-1992 (GIWV…RPFV). The Ricin B-type lectin domain maps to 1994–2127 (KRIYFRLRNK…EKFTQVWEAM (134 aa)).

Belongs to the beta/gamma-crystallin family.

Its function is as follows. May function as suppressor of malignant melanoma. It may exert its effects through interactions with the cytoskeleton. The polypeptide is Beta/gamma crystallin domain-containing protein 1 (Homo sapiens (Human)).